The sequence spans 217 residues: Thiopurine S-methyltransferase (217 aa).

S-adenosyl-L-methionine is bound by residues Trp10, Leu45, Glu66, and Arg123.

Belongs to the class I-like SAM-binding methyltransferase superfamily. TPMT family.

The protein localises to the cytoplasm. The enzyme catalyses S-adenosyl-L-methionine + a thiopurine = S-adenosyl-L-homocysteine + a thiopurine S-methylether.. The sequence is that of Thiopurine S-methyltransferase from Pseudomonas fluorescens (strain Pf0-1).